Consider the following 602-residue polypeptide: DNA damage-binding protein CMR1 (602 aa).

A disordered region spans residues 35–85; the sequence is KEVDNKSFSSPSSQKRRKTTKKPVIKKEISEPSRRSRRIAGIKSELEDPKQ. Basic residues predominate over residues 48–58; it reads QKRRKTTKKPV. Basic and acidic residues predominate over residues 59–68; that stretch reads IKKEISEPSR. WD repeat units lie at residues 229 to 270, 291 to 328, 390 to 430, 446 to 484, 526 to 569, and 571 to 602; these read ICHN…NDTK, RNVS…STEL, LHDK…KSVY, NSRL…KLDN, GRWV…LAHL, and EQVG…YLFE.

It belongs to the WD repeat DDB2/WDR76 family.

DNA-binding protein that binds to both single- and double-stranded DNA. Binds preferentially to UV-damaged DNA. May be involved in DNA-metabolic processes. This Candida albicans (strain SC5314 / ATCC MYA-2876) (Yeast) protein is DNA damage-binding protein CMR1.